A 208-amino-acid polypeptide reads, in one-letter code: Pyridoxine/pyridoxamine 5'-phosphate oxidase (208 aa).

Residues 53–58 (RTVLLK), 68–69 (YS), K75, and Q100 each bind FMN. Residue K58 coordinates substrate. Residues Y118, R122, and S126 each coordinate substrate. Residues 135–136 (QS) and W180 each bind FMN. 186-188 (RLH) lines the substrate pocket. R190 provides a ligand contact to FMN.

It belongs to the pyridoxamine 5'-phosphate oxidase family. As to quaternary structure, homodimer. It depends on FMN as a cofactor.

The enzyme catalyses pyridoxamine 5'-phosphate + O2 + H2O = pyridoxal 5'-phosphate + H2O2 + NH4(+). It carries out the reaction pyridoxine 5'-phosphate + O2 = pyridoxal 5'-phosphate + H2O2. It participates in cofactor metabolism; pyridoxal 5'-phosphate salvage; pyridoxal 5'-phosphate from pyridoxamine 5'-phosphate: step 1/1. Its pathway is cofactor metabolism; pyridoxal 5'-phosphate salvage; pyridoxal 5'-phosphate from pyridoxine 5'-phosphate: step 1/1. In terms of biological role, catalyzes the oxidation of either pyridoxine 5'-phosphate (PNP) or pyridoxamine 5'-phosphate (PMP) into pyridoxal 5'-phosphate (PLP). The protein is Pyridoxine/pyridoxamine 5'-phosphate oxidase of Xylella fastidiosa (strain 9a5c).